The primary structure comprises 98 residues: Citrate lyase acyl carrier protein (98 aa).

Position 14 is an O-(phosphoribosyl dephospho-coenzyme A)serine (serine 14).

Belongs to the CitD family. In terms of assembly, oligomer with a subunit composition of (alpha,beta,gamma)6.

The protein resides in the cytoplasm. Functionally, covalent carrier of the coenzyme of citrate lyase. This is Citrate lyase acyl carrier protein from Shigella flexneri.